The following is a 918-amino-acid chain: Cell surface glycoprotein 1 (918 aa).

Positions 1–34 (MTDTNEKIRSLFLTALMVFSVFAGTIAFSGGAAA) are cleaved as a signal peptide. Residues Asn-37, Asn-56, Asn-110, Asn-219, Asn-250, Asn-261, and Asn-291 are each glycosylated (N-linked (GlcNAc...) asparagine). Asn-306 is a glycosylation site (N-linked (GalNAc...) asparagine). Residues Asn-318, Asn-343, Asn-392, Asn-434, Asn-487, Asn-541, Asn-555, Asn-572, Asn-585, Asn-614, Asn-715, Asn-776, Asn-836, and Asn-845 are each glycosylated (N-linked (GlcNAc...) asparagine). The tract at residues 815–894 (HQDTNGNEAY…DESETTAAEG (80 aa)) is disordered. Residues 833–846 (YTQNGSAVTDSANV) show a composition bias toward polar residues. Positions 849–875 (VEEEQTEAPDTETETEAPDTETEEETD) are enriched in acidic residues. Residues 894 to 914 (GPGFTAAIALIALVAAALLAV) form a helical membrane-spanning segment. The short motif at 895–897 (PGF) is the PGF sorting signal element.

This sequence belongs to the halobacterial S-layer protein family. Post-translationally, N-glycosylated on Asn-306; this N-linked glycan is a branched trisaccharide containing 2-amino-6-sulfo-2,6-dideoxy-glucose (sulfoquinovosamine). In terms of processing, cleaved by the archaeosortase ArtA at the C-terminus, with removal of a short hydrophobic segment. Lipidation.

The protein resides in the secreted. It localises to the cell wall. Its subcellular location is the S-layer. The protein localises to the cell membrane. Its function is as follows. S-layer protein. The S-layer is a paracrystalline mono-layered assembly of proteins which coat the surface of the cell. In H.hispanica, the S-layer contains two different glycoproteins, Slg1 and Slg2, which share highly similar amino acid sequences. In Haloarcula hispanica (strain ATCC 33960 / DSM 4426 / JCM 8911 / NBRC 102182 / NCIMB 2187 / VKM B-1755), this protein is Cell surface glycoprotein 1.